Reading from the N-terminus, the 262-residue chain is Acyl-[acyl-carrier-protein]--UDP-N-acetylglucosamine O-acyltransferase (262 aa).

This sequence belongs to the transferase hexapeptide repeat family. LpxA subfamily. In terms of assembly, homotrimer.

The protein localises to the cytoplasm. It catalyses the reaction a (3R)-hydroxyacyl-[ACP] + UDP-N-acetyl-alpha-D-glucosamine = a UDP-3-O-[(3R)-3-hydroxyacyl]-N-acetyl-alpha-D-glucosamine + holo-[ACP]. It participates in glycolipid biosynthesis; lipid IV(A) biosynthesis; lipid IV(A) from (3R)-3-hydroxytetradecanoyl-[acyl-carrier-protein] and UDP-N-acetyl-alpha-D-glucosamine: step 1/6. Involved in the biosynthesis of lipid A, a phosphorylated glycolipid that anchors the lipopolysaccharide to the outer membrane of the cell. The protein is Acyl-[acyl-carrier-protein]--UDP-N-acetylglucosamine O-acyltransferase of Wigglesworthia glossinidia brevipalpis.